The sequence spans 860 residues: Putative mixed-linked glucan synthase 1 (860 aa).

2 helical membrane-spanning segments follow: residues 63-83 (ILHP…AFFA) and 93-113 (GAWL…SWVL). Asp183 is a catalytic residue. Residues 235–263 (ELMSDHRRVRREYEEFKVRIDSLSSTIRQ) are a coiled coil. Positions 381 and 383 each coordinate substrate. Asp549 is an active-site residue. A run of 6 helical transmembrane segments spans residues 625–645 (TYPI…MWLI), 655–675 (FGEY…IGMF), 693–713 (FYMI…ALKL), 747–767 (LLIP…VAVG), 781–801 (LAVL…PFAL), and 812–832 (AVLF…YVAF).

This sequence belongs to the glycosyltransferase 2 family. Plant cellulose synthase-like F subfamily.

It localises to the golgi apparatus membrane. Functionally, may catalyze both beta-1,3 and beta-1,4 glycosidic linkage on beta-D-glucan. Essential for (1,3;1,4)-beta-D-glucans synthesis in grasses and cereals (Poaceae). The mixed-linked glucans (which are not present in walls of dicotyledons or most other monocotyledonous plants) are particularly important constituents of the walls of the starchy endosperm and aleurone cells of cereal grains such as oats, wheat, rice and barley. They can account for up to 70% by weight of the wall. The polypeptide is Putative mixed-linked glucan synthase 1 (CSFL1) (Oryza sativa subsp. japonica (Rice)).